Here is a 552-residue protein sequence, read N- to C-terminus: FACT complex subunit POB3 (552 aa).

The span at 190-205 (KKEESSNEVVPKKEDG) shows a compositional bias: basic and acidic residues. 2 disordered regions span residues 190–209 (KKEESSNEVVPKKEDGAEGE) and 484–552 (QTAL…PKVE). Positions 490 to 529 (DSDEEDINMGSAGEDDESVDEDFQVSSDNDADEVAEEFDS) are enriched in acidic residues. The segment covering 541 to 552 (DEERPSKKPKVE) has biased composition (basic and acidic residues).

The protein belongs to the SSRP1 family. Forms a stable heterodimer with SPT16. The SPT16-POB3 dimer weakly associates with multiple molecules of NHP6 (NHP6A or NHP6B) to form the FACT (yFACT or SNP) complex. The FACT complex interacts with the CK2 (casein kinase II) complex subunits CKA1, CKA2, CKB1 and CKB2 and the components of the transcription machinery CHD1, CTR9, PAF1 and CDC73. The FACT complex interacts with the PAF1 complex. SPT16 interacts with SAS3 and POL1. Interacts directly with RFA1.

The protein resides in the nucleus. The protein localises to the chromosome. In terms of biological role, component of the FACT complex, a general chromatin factor that acts to reorganize nucleosomes. The FACT complex is involved in multiple processes that require DNA as a template such as mRNA elongation, DNA replication and DNA repair. During transcription elongation the FACT complex acts as a histone chaperone that both destabilizes and restores nucleosomal structure. It facilitates the passage of RNA polymerase II and transcription by promoting the dissociation of one histone H2A-H2B dimer from the nucleosome, then subsequently promotes the reestablishment of the nucleosome following the passage of RNA polymerase II. Transcription elongation is promoted by the repression of transcription initiation from cryptic sites. Also acts in establishing transcription initiation complexes and promotes SPT15/TBP-binding to a TATA box. Together with replication factor-A protein (RPA), FACT may play a role in nucleosome deposition during DNA replication. This is FACT complex subunit POB3 (POB3) from Saccharomyces cerevisiae (strain ATCC 204508 / S288c) (Baker's yeast).